The following is a 155-amino-acid chain: Small ribosomal subunit protein uS7c (155 aa).

This sequence belongs to the universal ribosomal protein uS7 family. In terms of assembly, part of the 30S ribosomal subunit.

Its subcellular location is the plastid. It localises to the chloroplast. One of the primary rRNA binding proteins, it binds directly to 16S rRNA where it nucleates assembly of the head domain of the 30S subunit. The protein is Small ribosomal subunit protein uS7c (rps7) of Cornus mas (Cornelian cherry dogwood).